Here is a 217-residue protein sequence, read N- to C-terminus: uncharacterized protein (217 aa).

The segment at 1-32 (MTLKKHRGKMSEKSNVNKKFTNSTQNNSNWSN) is disordered. Low complexity predominate over residues 22–32 (NSTQNNSNWSN).

This is an uncharacterized protein from Acidianus filamentous virus 2 (isolate Italy/Pozzuoli) (AFV-2).